Consider the following 1064-residue polypeptide: DNA-directed RNA polymerase subunit beta (1064 aa).

This sequence belongs to the RNA polymerase beta chain family. In terms of assembly, in plastids the minimal PEP RNA polymerase catalytic core is composed of four subunits: alpha, beta, beta', and beta''. When a (nuclear-encoded) sigma factor is associated with the core the holoenzyme is formed, which can initiate transcription.

The protein resides in the plastid. The protein localises to the chloroplast. The enzyme catalyses RNA(n) + a ribonucleoside 5'-triphosphate = RNA(n+1) + diphosphate. Functionally, DNA-dependent RNA polymerase catalyzes the transcription of DNA into RNA using the four ribonucleoside triphosphates as substrates. This chain is DNA-directed RNA polymerase subunit beta, found in Jasminum nudiflorum (Winter jasmine).